An 87-amino-acid polypeptide reads, in one-letter code: Small ribosomal subunit protein uS15 (87 aa).

Belongs to the universal ribosomal protein uS15 family. Part of the 30S ribosomal subunit. Forms a bridge to the 50S subunit in the 70S ribosome, contacting the 23S rRNA.

Functionally, one of the primary rRNA binding proteins, it binds directly to 16S rRNA where it helps nucleate assembly of the platform of the 30S subunit by binding and bridging several RNA helices of the 16S rRNA. Its function is as follows. Forms an intersubunit bridge (bridge B4) with the 23S rRNA of the 50S subunit in the ribosome. The protein is Small ribosomal subunit protein uS15 of Dehalococcoides mccartyi (strain ATCC BAA-2266 / KCTC 15142 / 195) (Dehalococcoides ethenogenes (strain 195)).